A 316-amino-acid chain; its full sequence is Coiled-coil domain-containing protein 130 homolog (316 aa).

Residues 182 to 203 (ANSRLRAEFRQQKKEINGQQEL) adopt a coiled-coil conformation. The disordered stretch occupies residues 287 to 316 (KLEETTSSATNEKPISLVGDYSSSDNDSNG).

This sequence belongs to the CWC16 family.

This chain is Coiled-coil domain-containing protein 130 homolog, found in Drosophila melanogaster (Fruit fly).